The chain runs to 355 residues: MKKNKRLMVMAGGTGGHVFPGLAVAKKLQQQGWEIRWLGTADRMEAELVPKHGIDIDFIKVKGLRGQGIKRLVLAPFQILNAIFQAKAHIKRWQPDAVLGMGGYVSGPGGIAAWLSGIPVVLHEQNAVAGLTNHWLAKIAKKVFQAFPGAFKDAPVVGNPVREDVVALPDPMQRMQDREGAVRILVMGGSQGARILNQTMPQVMAQLGSGFEIRHQAGKGSADEVRLAYQQVGVEHVEVSEFIDDVAAQYAWADLLVCRSGALTVSEVSAAGVGAIFIPFMHKDRQQALNADHLVACGAALMIEQPQLTVDKLAGEIQKLGRDTLLSMALHARAAAQNNADQVVADAIVALTEQK.

UDP-N-acetyl-alpha-D-glucosamine-binding positions include T14 to G16, N126, R162, S190, I243, A262 to E267, and Q287.

It belongs to the glycosyltransferase 28 family. MurG subfamily.

The protein localises to the cell inner membrane. It catalyses the reaction di-trans,octa-cis-undecaprenyl diphospho-N-acetyl-alpha-D-muramoyl-L-alanyl-D-glutamyl-meso-2,6-diaminopimeloyl-D-alanyl-D-alanine + UDP-N-acetyl-alpha-D-glucosamine = di-trans,octa-cis-undecaprenyl diphospho-[N-acetyl-alpha-D-glucosaminyl-(1-&gt;4)]-N-acetyl-alpha-D-muramoyl-L-alanyl-D-glutamyl-meso-2,6-diaminopimeloyl-D-alanyl-D-alanine + UDP + H(+). Its pathway is cell wall biogenesis; peptidoglycan biosynthesis. Its function is as follows. Cell wall formation. Catalyzes the transfer of a GlcNAc subunit on undecaprenyl-pyrophosphoryl-MurNAc-pentapeptide (lipid intermediate I) to form undecaprenyl-pyrophosphoryl-MurNAc-(pentapeptide)GlcNAc (lipid intermediate II). The sequence is that of UDP-N-acetylglucosamine--N-acetylmuramyl-(pentapeptide) pyrophosphoryl-undecaprenol N-acetylglucosamine transferase from Vibrio vulnificus (strain YJ016).